A 148-amino-acid polypeptide reads, in one-letter code: MNSMKQKEAFLGVDYGKKRIGLAFASAPLLITLPIGSINTCSSLALTAQALITIIKERAVTTVVFGNPLPMQKSYASSVQSEIQELAALVRDMTSLEVILWDERLSSAQAERMLKNDCGLSRKQRKNSSDSLAATLILSSFLDSRKLY.

It belongs to the YqgF nuclease family.

The protein localises to the cytoplasm. In terms of biological role, could be a nuclease involved in processing of the 5'-end of pre-16S rRNA. In Chlamydia muridarum (strain MoPn / Nigg), this protein is Putative pre-16S rRNA nuclease.